A 499-amino-acid polypeptide reads, in one-letter code: Maturase K (499 aa).

Belongs to the intron maturase 2 family. MatK subfamily.

It is found in the plastid. The protein resides in the chloroplast. In terms of biological role, usually encoded in the trnK tRNA gene intron. Probably assists in splicing its own and other chloroplast group II introns. The sequence is that of Maturase K from Gymnocladus dioicus (Kentucky coffee tree).